The sequence spans 157 residues: Alpha-amylase/trypsin inhibitor RA16 (157 aa).

Positions 1–26 are cleaved as a signal peptide; the sequence is MASNKVVISALLVVVVSVLAATTTMA. 5 cysteine pairs are disulfide-bonded: C41/C89, C55/C77, C63/C121, C78/C137, and C91/C149.

It belongs to the cereal trypsin/alpha-amylase inhibitor family. Post-translationally, five disulfide bonds are present.

The protein localises to the secreted. Its function is as follows. Seed storage protein. The protein is Alpha-amylase/trypsin inhibitor RA16 of Oryza sativa subsp. japonica (Rice).